The chain runs to 679 residues: Probable metal-nicotianamine transporter YSL18 (679 aa).

A compositionally biased stretch (basic and acidic residues) spans 1 to 17; it reads MESVGDPRDGPSTERAF. A disordered region spans residues 1-21; sequence MESVGDPRDGPSTERAFEGQP. The next 14 helical transmembrane spans lie at 29 to 49, 51 to 71, 101 to 121, 144 to 164, 211 to 231, 255 to 275, 309 to 329, 379 to 399, 407 to 427, 441 to 461, 497 to 517, 547 to 567, 593 to 613, and 627 to 647; these read VTLRAVVASVALGVALSSVMM, LVFTSGIIPSLNISAGLLGFF, CVVACASMTYSGGFGSYLLAM, FGRMMAFFFLVSFVGLLAIVP, LASLFWSIFQWFYTGGPNCGF, VGIGMISPHLINVSMLFGSII, VFCAIAMILGDGIFQLVAISL, FAISGYVVLATVSTVVIPLMY, VAAAYAFAPVLAFCNAYGTGV, ILMFASWIGIKNGGIVGSLVI, VIGTAMGCVVNPAVFTVFHHF, LPKYCLAISATFFVLALAVCA, FLLVPAVSIDMCIGSLIVFLW, and VLASGLICGDGLFSIPYALLA.

The protein belongs to the YSL (TC 2.A.67.2) family.

The protein resides in the membrane. Its function is as follows. May be involved in the transport of nicotianamine-chelated metals. In Oryza sativa subsp. japonica (Rice), this protein is Probable metal-nicotianamine transporter YSL18 (YSL18).